Consider the following 178-residue polypeptide: Peptidyl-prolyl cis-trans isomerase (178 aa).

Positions 1–17 (MKLLFFFLVLAVSAAVA) are cleaved as a signal peptide. Residues 26–177 (FMDIEIDGES…KIAKITDIGL (152 aa)) form the PPIase cyclophilin-type domain.

It belongs to the cyclophilin-type PPIase family. PPIase A subfamily.

It carries out the reaction [protein]-peptidylproline (omega=180) = [protein]-peptidylproline (omega=0). PPIases accelerate the folding of proteins. It catalyzes the cis-trans isomerization of proline imidic peptide bonds in oligopeptides. Up-regulates interferon gamma production by bovine T-cells. Stimulates high levels of IFN-gamma production by peripheral blood mononuclear cells and T-cells. The IFN-gamma-inducing effect is blocked by cyclosporin A (CsA). In Neospora caninum (Coccidian parasite), this protein is Peptidyl-prolyl cis-trans isomerase.